The following is a 234-amino-acid chain: Probable transcriptional regulatory protein TcrX (234 aa).

In terms of domain architecture, Response regulatory spans 10–124 (TVLVVDDEPV…EVVLRLRALL (115 aa)). D59 is subject to 4-aspartylphosphate. Positions 135 to 232 (GAQLVVGDLV…LRGAGYVLKP (98 aa)) form a DNA-binding region, ompR/PhoB-type.

In terms of processing, phosphorylated by TcrY.

Its subcellular location is the cytoplasm. Functionally, member of the two-component regulatory system TcrY/TcrX. This is Probable transcriptional regulatory protein TcrX (tcrX) from Mycobacterium tuberculosis (strain ATCC 25618 / H37Rv).